The following is a 98-amino-acid chain: NADH-ubiquinone oxidoreductase chain 4L (98 aa).

The next 3 helical transmembrane spans lie at 1–21 (MSLI…GLLM), 29–49 (SLLC…MMVL), and 61–81 (IILL…LVMI).

This sequence belongs to the complex I subunit 4L family. In terms of assembly, core subunit of respiratory chain NADH dehydrogenase (Complex I) which is composed of 45 different subunits.

It localises to the mitochondrion inner membrane. It catalyses the reaction a ubiquinone + NADH + 5 H(+)(in) = a ubiquinol + NAD(+) + 4 H(+)(out). Core subunit of the mitochondrial membrane respiratory chain NADH dehydrogenase (Complex I) which catalyzes electron transfer from NADH through the respiratory chain, using ubiquinone as an electron acceptor. Part of the enzyme membrane arm which is embedded in the lipid bilayer and involved in proton translocation. This chain is NADH-ubiquinone oxidoreductase chain 4L (MT-ND4L), found in Rhinoceros unicornis (Greater Indian rhinoceros).